A 525-amino-acid polypeptide reads, in one-letter code: Transcriptional regulatory protein TOD6 (525 aa).

The segment at Gly22–Asp82 is disordered. A compositionally biased stretch (polar residues) spans Leu35–Lys47. Residues Ser61–Lys71 are compositionally biased toward basic and acidic residues. The HTH myb-type domain occupies Ala67–Leu124. A DNA-binding region (H-T-H motif) is located at residues Trp97–Lys120. Position 280 is a phosphoserine (Ser280). The segment at Pro283–Ser308 is disordered. Residues His299–Ser308 are compositionally biased toward low complexity. Phosphoserine occurs at positions 333, 341, and 366. The segment at Thr451 to Glu510 is disordered. Composition is skewed to polar residues over residues Gly472–Tyr483 and Ser495–Asp506.

Belongs to the DOT6 family. As to quaternary structure, component of the RPD3C(L) complex composed of at least ASH1, CTI6, DEP1, DOT6, PHO23, RPD3, RXT2, RXT3, SAP30, SDS3, SIN3, TOD6; UME1 and UME6.

Its subcellular location is the cytoplasm. It is found in the nucleus. Component of the RPD3 histone deacetylase complex RPD3C(L) responsible for the deacetylation of lysine residues on the N-terminal part of the core histones (H2A, H2B, H3 and H4). Histone deacetylation gives a tag for epigenetic repression and plays an important role in transcriptional regulation, cell cycle progression and developmental events. TOD6 binds to sequences containing the core CGATG, which resembles the PAC (Polymerase A and C) motif. The protein is Transcriptional regulatory protein TOD6 (TOD6) of Saccharomyces cerevisiae (strain ATCC 204508 / S288c) (Baker's yeast).